Here is a 261-residue protein sequence, read N- to C-terminus: Phosphate import ATP-binding protein PstB 4 (261 aa).

Residues 8–256 (IKVNNLSFYY…PHDSRTREYV (249 aa)) form the ABC transporter domain. 40 to 47 (GPSGCGKS) serves as a coordination point for ATP.

This sequence belongs to the ABC transporter superfamily. Phosphate importer (TC 3.A.1.7) family. In terms of assembly, the complex is composed of two ATP-binding proteins (PstB), two transmembrane proteins (PstC and PstA) and a solute-binding protein (PstS).

Its subcellular location is the cell inner membrane. The enzyme catalyses phosphate(out) + ATP + H2O = ADP + 2 phosphate(in) + H(+). In terms of biological role, part of the ABC transporter complex PstSACB involved in phosphate import. Responsible for energy coupling to the transport system. The chain is Phosphate import ATP-binding protein PstB 4 from Trichormus variabilis (strain ATCC 29413 / PCC 7937) (Anabaena variabilis).